The sequence spans 223 residues: Ras-related protein RABA4c (223 aa).

22 to 29 (GDSAVGKS) contacts GTP. The Effector region signature appears at 44–52 (SKATIGVEF). Residues 70-74 (DTAGQ), 128-131 (NKTD), and 158-159 (SA) each bind GTP. S-geranylgeranyl cysteine attachment occurs at residues Cys219 and Cys220.

Belongs to the small GTPase superfamily. Rab family.

The protein localises to the cell membrane. Its function is as follows. Intracellular vesicle trafficking and protein transport. The sequence is that of Ras-related protein RABA4c (RABA4C) from Arabidopsis thaliana (Mouse-ear cress).